The following is a 221-amino-acid chain: Pleckstrin homology domain-containing family B member 2 (221 aa).

In terms of domain architecture, PH spans 2-109 (AFVKSGWLLR…WKFTLQDSRT (108 aa)). Lys-20 provides a ligand contact to a 1,2-diacyl-sn-glycero-3-phospho-L-serine.

As to expression, highly expressed in brain, retina, heart and kidney. Detected at lower levels in lung, muscle and nerve.

Its subcellular location is the recycling endosome membrane. Functionally, involved in retrograde transport of recycling endosomes. This is Pleckstrin homology domain-containing family B member 2 (Plekhb2) from Mus musculus (Mouse).